A 986-amino-acid chain; its full sequence is Translation initiation factor IF-2 (986 aa).

The segment at 95-394 (TFVRRDETSA…GRGKHQDQNT (300 aa)) is disordered. A compositionally biased stretch (basic and acidic residues) spans 122–182 (ELQRREEEAR…EEEAAKKRAA (61 aa)). Positions 183 to 222 (AEAAAREQAQAAKPAQAAQPAAAKAEPVAAKAAEPAVAKQ) are enriched in low complexity. Positions 228–277 (ERAAAERAAQREAAKKAEDAARQAAEKARAEQEQIAKRRAAAEAEARAIR) are enriched in basic and acidic residues. Residues 320 to 342 (APSRPAAKKPAAAAPAATTTPSA) show a composition bias toward low complexity. Positions 371–384 (TSGGVDRGWRGGPK) are enriched in gly residues. The 170-residue stretch at 486–655 (PRPPVVTVMG…LLQAEVLELK (170 aa)) folds into the tr-type G domain. The interval 495 to 502 (GHVDHGKT) is G1. 495–502 (GHVDHGKT) provides a ligand contact to GTP. The tract at residues 520 to 524 (GITQH) is G2. The G3 stretch occupies residues 541–544 (DTPG). Residues 541 to 545 (DTPGH) and 595 to 598 (NKID) each bind GTP. Residues 595–598 (NKID) form a G4 region. The tract at residues 631–633 (SAK) is G5.

It belongs to the TRAFAC class translation factor GTPase superfamily. Classic translation factor GTPase family. IF-2 subfamily.

It is found in the cytoplasm. Functionally, one of the essential components for the initiation of protein synthesis. Protects formylmethionyl-tRNA from spontaneous hydrolysis and promotes its binding to the 30S ribosomal subunits. Also involved in the hydrolysis of GTP during the formation of the 70S ribosomal complex. The chain is Translation initiation factor IF-2 from Paraburkholderia phytofirmans (strain DSM 17436 / LMG 22146 / PsJN) (Burkholderia phytofirmans).